A 359-amino-acid polypeptide reads, in one-letter code: Protein Wnt-2 (359 aa).

A signal peptide spans 1–25; that stretch reads MNAPLAGIWPWLPLLWAWLVPEVSS. Disulfide bonds link Cys75-Cys86, Cys126-Cys134, Cys136-Cys156, Cys205-Cys219, Cys207-Cys214, Cys277-Cys308, Cys293-Cys303, Cys307-Cys347, Cys323-Cys338, Cys325-Cys335, and Cys330-Cys331. Ser211 carries O-palmitoleoyl serine; by PORCN lipidation. Residue Asn294 is glycosylated (N-linked (GlcNAc...) asparagine).

This sequence belongs to the Wnt family. In terms of processing, palmitoleoylation is required for efficient binding to frizzled receptors. Depalmitoleoylation leads to Wnt signaling pathway inhibition.

It localises to the secreted. Its subcellular location is the extracellular space. The protein localises to the extracellular matrix. Ligand for members of the frizzled family of seven transmembrane receptors. Probable developmental protein. May be a signaling molecule which affects the development of discrete regions of tissues. Is likely to signal over only few cell diameters. The chain is Protein Wnt-2 (WNT2) from Echinops telfairi (Lesser hedgehog tenrec).